The primary structure comprises 225 residues: Ribonuclease 3 (225 aa).

The RNase III domain occupies 2-128 (LSTLIKKLKI…LFGAIYLDLG (127 aa)). Glu-43 is a Mg(2+) binding site. Asp-47 is an active-site residue. Mg(2+) is bound by residues Asn-114 and Glu-117. Glu-117 is a catalytic residue. Residues 152–220 (DFKTQLQELV…ARYVLNILSK (69 aa)) form the DRBM domain.

It belongs to the ribonuclease III family. In terms of assembly, homodimer. Requires Mg(2+) as cofactor.

The protein localises to the cytoplasm. It catalyses the reaction Endonucleolytic cleavage to 5'-phosphomonoester.. Functionally, digests double-stranded RNA. Involved in the processing of primary rRNA transcript to yield the immediate precursors to the large and small rRNAs (23S and 16S). Processes some mRNAs, and tRNAs when they are encoded in the rRNA operon. Processes pre-crRNA and tracrRNA of type II CRISPR loci if present in the organism. This chain is Ribonuclease 3, found in Phytoplasma mali (strain AT).